The primary structure comprises 437 residues: Enolase 2 (437 aa).

(2R)-2-phosphoglycerate is bound at residue glutamine 162. The active-site Proton donor is glutamate 204. Mg(2+) is bound by residues aspartate 251, glutamate 297, and aspartate 324. Lysine 349, arginine 378, serine 379, and lysine 400 together coordinate (2R)-2-phosphoglycerate. The active-site Proton acceptor is lysine 349.

It belongs to the enolase family. Mg(2+) is required as a cofactor.

The protein resides in the cytoplasm. It localises to the secreted. It is found in the cell surface. The enzyme catalyses (2R)-2-phosphoglycerate = phosphoenolpyruvate + H2O. It functions in the pathway carbohydrate degradation; glycolysis; pyruvate from D-glyceraldehyde 3-phosphate: step 4/5. Catalyzes the reversible conversion of 2-phosphoglycerate (2-PG) into phosphoenolpyruvate (PEP). It is essential for the degradation of carbohydrates via glycolysis. The protein is Enolase 2 of Chlorobaculum tepidum (strain ATCC 49652 / DSM 12025 / NBRC 103806 / TLS) (Chlorobium tepidum).